Here is a 366-residue protein sequence, read N- to C-terminus: Cell division protein FtsY homolog, chloroplastic (366 aa).

A chloroplast-targeting transit peptide spans 1-40; that stretch reads MATSSAHLSFLAGRISPFSSERIGLFPLRGEFRPRMTRFR. GTP is bound by residues 171–178, 254–258, and 318–321; these read GVNGGGKT, DTSGR, and TKLD.

The protein belongs to the GTP-binding SRP family. As to quaternary structure, monomer. Interacts with FFC/cpSRP54, a component of the cpSRP complex, composed of a FFC/cpSRP54 monomer and a CAO/cpSRP43 dimer. The complex with FFC/cpSRP54 is formed when both proteins are bound with GTP. In terms of tissue distribution, expressed in green tissues. Low levels in roots and seeds.

It localises to the plastid. Its subcellular location is the chloroplast stroma. The protein localises to the chloroplast thylakoid membrane. In terms of biological role, signal recognition particle receptor protein. Binds GTP specifically. The GTPase activity is inhibited by the N-terminus of the protein until binding to the thylakoid membrane. Activates the GTPase activity of FFC/cpSRP54 when bound to the cpSRP complex. Required for light-harvesting chlorophyll a/b-binding protein (LHCP) integration into thylakoids. Might be also functionally linked to the Sec translocation machinery. This is Cell division protein FtsY homolog, chloroplastic (CPFTSY) from Arabidopsis thaliana (Mouse-ear cress).